A 417-amino-acid polypeptide reads, in one-letter code: UDP-N-acetylmuramoylalanine--D-glutamate ligase (417 aa).

Residue 101 to 107 (GTAGKTS) participates in ATP binding.

The protein belongs to the MurCDEF family.

It is found in the cytoplasm. The catalysed reaction is UDP-N-acetyl-alpha-D-muramoyl-L-alanine + D-glutamate + ATP = UDP-N-acetyl-alpha-D-muramoyl-L-alanyl-D-glutamate + ADP + phosphate + H(+). It functions in the pathway cell wall biogenesis; peptidoglycan biosynthesis. Its function is as follows. Cell wall formation. Catalyzes the addition of glutamate to the nucleotide precursor UDP-N-acetylmuramoyl-L-alanine (UMA). This Thermus thermophilus (strain ATCC BAA-163 / DSM 7039 / HB27) protein is UDP-N-acetylmuramoylalanine--D-glutamate ligase.